The primary structure comprises 62 residues: Small ribosomal subunit protein uS14 (62 aa).

The Zn(2+) site is built by Cys25, Cys28, Cys41, and Cys44.

Belongs to the universal ribosomal protein uS14 family. Zinc-binding uS14 subfamily. In terms of assembly, part of the 30S ribosomal subunit. Contacts proteins S3 and S10. Zn(2+) is required as a cofactor.

Its function is as follows. Binds 16S rRNA, required for the assembly of 30S particles and may also be responsible for determining the conformation of the 16S rRNA at the A site. This is Small ribosomal subunit protein uS14 from Sulfurihydrogenibium sp. (strain YO3AOP1).